The sequence spans 201 residues: FMN-dependent NADH:quinone oxidoreductase (201 aa).

FMN contacts are provided by residues serine 9 and 16-18 (SYS).

The protein belongs to the azoreductase type 1 family. As to quaternary structure, homodimer. It depends on FMN as a cofactor.

The enzyme catalyses 2 a quinone + NADH + H(+) = 2 a 1,4-benzosemiquinone + NAD(+). It carries out the reaction N,N-dimethyl-1,4-phenylenediamine + anthranilate + 2 NAD(+) = 2-(4-dimethylaminophenyl)diazenylbenzoate + 2 NADH + 2 H(+). Quinone reductase that provides resistance to thiol-specific stress caused by electrophilic quinones. Functionally, also exhibits azoreductase activity. Catalyzes the reductive cleavage of the azo bond in aromatic azo compounds to the corresponding amines. In Mesomycoplasma hyopneumoniae (strain J / ATCC 25934 / NCTC 10110) (Mycoplasma hyopneumoniae), this protein is FMN-dependent NADH:quinone oxidoreductase.